Here is a 142-residue protein sequence, read N- to C-terminus: Small heat shock protein IbpB (142 aa).

The region spanning 26–137 (TGESQSFPPY…APQRIAISER (112 aa)) is the sHSP domain.

The protein belongs to the small heat shock protein (HSP20) family. As to quaternary structure, homodimer. Forms homomultimers of about 100-150 subunits at optimal growth temperatures. Conformation changes to oligomers at high temperatures or high ionic concentrations. The decrease in size of the multimers is accompanied by an increase in chaperone activity.

It is found in the cytoplasm. Functionally, associates with aggregated proteins, together with IbpA, to stabilize and protect them from irreversible denaturation and extensive proteolysis during heat shock and oxidative stress. Aggregated proteins bound to the IbpAB complex are more efficiently refolded and reactivated by the ATP-dependent chaperone systems ClpB and DnaK/DnaJ/GrpE. Its activity is ATP-independent. In Citrobacter koseri (strain ATCC BAA-895 / CDC 4225-83 / SGSC4696), this protein is Small heat shock protein IbpB.